Here is a 204-residue protein sequence, read N- to C-terminus: Urease accessory protein UreG (204 aa).

11 to 18 lines the GTP pocket; sequence GPVGAGKT.

The protein belongs to the SIMIBI class G3E GTPase family. UreG subfamily. Homodimer. UreD, UreF and UreG form a complex that acts as a GTP-hydrolysis-dependent molecular chaperone, activating the urease apoprotein by helping to assemble the nickel containing metallocenter of UreC. The UreE protein probably delivers the nickel.

It localises to the cytoplasm. Its function is as follows. Facilitates the functional incorporation of the urease nickel metallocenter. This process requires GTP hydrolysis, probably effectuated by UreG. The polypeptide is Urease accessory protein UreG (Staphylococcus epidermidis (strain ATCC 35984 / DSM 28319 / BCRC 17069 / CCUG 31568 / BM 3577 / RP62A)).